A 642-amino-acid chain; its full sequence is MKKLPFLIIIIYIFLILISISSSIDYNYNNDIDNNNNNIINRNKNKNKNNLYNNKVIIKNDDNDDEINNKFKIRLDDNEDQDIYNEYHFLSKVHNRLAFNIFGSSSENSGSGSNSNSNSKNTDSSTGPTPSPISINGTLNSTATVYWSGGKSSCKSVNCTEEGFSTGDSYACSYEITPTYQRGQWEKGVKYFKDPLPKSILTSQVVGVSFVINGVVGCTPLKQELTTIEFLIQDVQVGQTISTNRSDDCSCGICYKDYEILPQSYDLLGYNKSGLNKVQLLLLDNSICATSLDIIFYYHPSTIPPTPTPTPSKPTISLLKKYLIIGFSIVGGLLIIGGCFLLIRNRYRSSGYYKPDKNDYTQIKDGKDIDIHQIKIGVRIGKGNYGEVYLGTWRGSQVAVKKLPAHNINENILKEFHREINLMKNLRHPNVIQFLGSCLIPPDICICTEYMPRGSLYSILHDQALQLQWSLLIKMMIDAAKGVIYLHNSTPVILHRDLKSHNLLVDENWKVKVADFGLSTIEQQGATMTACGTPCWTSPEVLRSQRYTEKADVYSFGIILWECATRQDPYFGIPPFQVIFAVGREGMRPPVPQNGPPKYIQLLIDCLNENPSHRPTMEQCLERLESIDSSGYSDLQYVRQQL.

A signal peptide spans Met-1 to Ser-23. The Extracellular segment spans residues Ile-24–Tyr-322. Low complexity predominate over residues Ser-106–Pro-128. The segment at Ser-106–Asn-136 is disordered. N-linked (GlcNAc...) asparagine glycosylation is found at Asn-136, Asn-140, Asn-158, Asn-244, and Asn-271. The helical transmembrane segment at Leu-323 to Ile-343 threads the bilayer. The Cytoplasmic segment spans residues Arg-344–Leu-642. The Protein kinase domain maps to Ile-374–Ile-627. ATP-binding positions include Ile-380–Val-388 and Lys-401. The active-site Proton acceptor is Asp-497.

Belongs to the protein kinase superfamily. TKL Ser/Thr protein kinase family.

It is found in the membrane. It carries out the reaction L-seryl-[protein] + ATP = O-phospho-L-seryl-[protein] + ADP + H(+). It catalyses the reaction L-threonyl-[protein] + ATP = O-phospho-L-threonyl-[protein] + ADP + H(+). This is Probable serine/threonine-protein kinase drkA (drkA) from Dictyostelium discoideum (Social amoeba).